The primary structure comprises 86 residues: 4-hydroxyphenylacetate decarboxylase small subunit (86 aa).

Residues His3, Cys6, Cys19, Cys36, Cys45, Cys48, Cys62, and Cys80 each contribute to the [4Fe-4S] cluster site.

Belongs to the HPA decarboxylase small subunit family. As to quaternary structure, heterooctamer consisting of 4 large (HpdB) subunits and 4 small (HpdC) subunits, arranged as a tetramer of heterodimers. [4Fe-4S] cluster serves as cofactor.

It catalyses the reaction 4-hydroxyphenylacetate + H(+) = 4-methylphenol + CO2. It carries out the reaction 3,4-dihydroxyphenylacetate + H(+) = 4-methylcatechol + CO2. In terms of biological role, component of the HPA decarboxylase that decarboxylates phenylacetates with a hydroxyl group in the p-position. Active toward 4-hydroxyphenylacetate and 3,4-dihydroxyphenylacetate, forming 4-methylphenol and 4-methylcatechol, respectively. Is likely involved in the catabolism of aromatic amino acids such as tyrosine fermentation. 4-methylphenol (p-cresol) formation provides metabolic toxicity, which allows an active suppression of other microbes and may provide growth advantages for the producers in highly competitive environments. The small subunit is essential for enzymatic activity of HPA decarboxylase, and also seems to be involved in the regulation of the enzyme oligomeric state and catalytic activity. This chain is 4-hydroxyphenylacetate decarboxylase small subunit, found in Clostridium scatologenes.